We begin with the raw amino-acid sequence, 505 residues long: Beta-glucosidase 18 (505 aa).

A signal peptide spans Met1 to Ala26. Gln46 contacts a beta-D-glucoside. N-linked (GlcNAc...) asparagine glycosylation occurs at Asn55. Residues His148 and Asn193–Glu194 contribute to the a beta-D-glucoside site. Glu194 functions as the Proton donor in the catalytic mechanism. The cysteines at positions 213 and 220 are disulfide-linked. Tyr337 contributes to the a beta-D-glucoside binding site. Cys345 and Cys350 are disulfide-bonded. A beta-D-glucoside is bound by residues Glu408, Trp457, Glu464–Trp465, and Phe473. Glu408 functions as the Nucleophile in the catalytic mechanism.

It belongs to the glycosyl hydrolase 1 family. As to expression, expressed in roots, leaves, flowers and pollen.

It carries out the reaction Hydrolysis of terminal, non-reducing beta-D-glucosyl residues with release of beta-D-glucose.. Functionally, hydrolyzes glycosides and monolignol glucosides. Can hydrolyze para-nitrophenyl beta-D-glucopyranoside (pNPGlc) in vitro. Hydrolyzes para-nitrophenyl beta-D-fucopyranoside, para-nitrophenyl beta-D-galactopyranoside and para-nitrophenyl beta-D-xylopyranoside in vitro. Hydrolyzes the monolignol glucosides coniferin and syringin with high catalytic efficiencies. This chain is Beta-glucosidase 18, found in Oryza sativa subsp. japonica (Rice).